A 214-amino-acid chain; its full sequence is Pyrrolidone-carboxylate peptidase (214 aa).

Residues glutamate 79, cysteine 142, and histidine 166 contribute to the active site.

This sequence belongs to the peptidase C15 family. Homotetramer.

It localises to the cytoplasm. The enzyme catalyses Release of an N-terminal pyroglutamyl group from a polypeptide, the second amino acid generally not being Pro.. Its function is as follows. Removes 5-oxoproline from various penultimate amino acid residues except L-proline. The sequence is that of Pyrrolidone-carboxylate peptidase from Fusobacterium nucleatum subsp. nucleatum (strain ATCC 25586 / DSM 15643 / BCRC 10681 / CIP 101130 / JCM 8532 / KCTC 2640 / LMG 13131 / VPI 4355).